Reading from the N-terminus, the 632-residue chain is Golgin subfamily A member 8J (632 aa).

The disordered stretch occupies residues 1-76 (MAEETQHNKL…TSSATLKDLE (76 aa)). Coiled-coil stretches lie at residues 86-154 (LDSR…HMKR) and 220-421 (LKVQ…SLMA). Composition is skewed to basic and acidic residues over residues 352-362 (KQEERIQEQHK) and 427-440 (HGGE…EEAP). Disordered stretches follow at residues 352–377 (KQEE…FKEP), 423–452 (PGEG…DPES), and 496–524 (LSEP…DEGE). The span at 508–520 (LGGGHHQAGAQGG) shows a compositional bias: gly residues.

The protein belongs to the GOLGA8 family.

In Homo sapiens (Human), this protein is Golgin subfamily A member 8J (GOLGA8J).